We begin with the raw amino-acid sequence, 191 residues long: Dephospho-CoA kinase (191 aa).

The region spanning 3-191 (AIGITGSYAS…NLIANLECRV (189 aa)) is the DPCK domain. Position 11-16 (11-16 (ASGKTF)) interacts with ATP.

It belongs to the CoaE family.

Its subcellular location is the cytoplasm. The catalysed reaction is 3'-dephospho-CoA + ATP = ADP + CoA + H(+). Its pathway is cofactor biosynthesis; coenzyme A biosynthesis; CoA from (R)-pantothenate: step 5/5. Catalyzes the phosphorylation of the 3'-hydroxyl group of dephosphocoenzyme A to form coenzyme A. The sequence is that of Dephospho-CoA kinase from Rickettsia bellii (strain RML369-C).